Reading from the N-terminus, the 1191-residue chain is Serine/threonine-protein kinase dkf-2 (1191 aa).

Disordered stretches follow at residues 11-48 and 108-155; these read YTSM…TTTS and MLSR…GGHV. The segment covering 123 to 139 has biased composition (basic and acidic residues); sequence TPDDHYSNPSDKRREVP. The segment covering 140–150 has biased composition (low complexity); sequence SIRSTSSNSSS. 2 consecutive Phorbol-ester/DAG-type zinc fingers follow at residues 314 to 364 and 466 to 531; these read PHTL…PNNC and PHTF…AKDC. The tract at residues 549-594 is disordered; it reads VSEDRDDDLSLRSGSGGHKKAQNTPSAPLQGSEGSGSPGGAVVSFA. The region spanning 632–713 is the PH domain; it reads LLKEGWIVHY…VYFVYSSLTD (82 aa). The disordered stretch occupies residues 730 to 786; that stretch reads PSTVSSTDSGYLGSSGASSSCVRSREGSTVSSTITVDRTRRGGSTTSTENSEAESES. Low complexity predominate over residues 738–751; that stretch reads SGYLGSSGASSSCV. The segment covering 756 to 765 has biased composition (polar residues); the sequence is GSTVSSTITV. The segment covering 773–786 has biased composition (low complexity); the sequence is STTSTENSEAESES. Positions 891–1147 constitute a Protein kinase domain; the sequence is IFAEEVLGSG…VAKAQSHIWM (257 aa). Residues 897-905 and Lys920 contribute to the ATP site; that span reads LGSGQFGTV. Asp1014 functions as the Proton acceptor in the catalytic mechanism. Residues Ser1046 and Ser1050 each carry the phosphoserine modification.

The protein belongs to the protein kinase superfamily. CAMK Ser/Thr protein kinase family. PKD subfamily. Mg(2+) is required as a cofactor. Phosphorylation on Ser-1046 is the dominant regulator of catalysis, phosphorylation on Ser-1050 has a lesser effect. Prolonged phosphorylation results in ubiquitination and degradation.

Its subcellular location is the cytoplasm. It is found in the membrane. The catalysed reaction is L-seryl-[protein] + ATP = O-phospho-L-seryl-[protein] + ADP + H(+). The enzyme catalyses L-threonyl-[protein] + ATP = O-phospho-L-threonyl-[protein] + ADP + H(+). Its activity is regulated as follows. Activated by DAG and phorbol esters. Phorbol-ester/DAG-type domain 1 binds phorbol ester with low affinity. Phorbol-ester/DAG-type domain 2 binds phorbol ester with high affinity and targets the kinase to the cell periphery, enabling phosphorylation and activation by colocalized tpa-1. Both domains 1 and 2 appear to bind DAG with equal affinity so may contribute equally to translocation and activation. Its function is as follows. Converts transient diacylglycerol (DAG) signals into prolonged physiological effects, downstream of PKC. Acts in the intestine to regulate both innate immunity by promoting activation of pmk-1 and also stress response and life span by acting as an upstream, negative regulator of the daf-16 transcription factor. The polypeptide is Serine/threonine-protein kinase dkf-2 (Caenorhabditis briggsae).